The primary structure comprises 324 residues: MHGSLLKLALLSFSLGSSAAVLPRDTGRTSAPSGCSTVGTSGDYSTIGDALTALGSSTADACIYIAAGTYEEQLVINYAGHLTLYGETTDTQTYKQNTVTITHTISSPEAGSLDNSATVNIKSDLVSVYNINIANGYGSGAQAVALVANADQLGFYACQFTGYQDTLYAKAGHQYYINSRIEGAVDYIFGDASAWFENCDIVSNGAGYITAMSRETTSDTAWYAIDHCNIKAASGVDLTGDVYLGRPWRVLARVIYQYSVLPDIINAKGWHSMADGATPLYYEFNNTGAGSDTSDREYLSTIDAPVTKETVLGDDYKNWVDLSY.

Positions 1-19 (MHGSLLKLALLSFSLGSSA) are cleaved as a signal peptide. Residue glutamine 142 coordinates substrate. The Proton donor role is filled by aspartate 165. Aspartate 186 acts as the Nucleophile in catalysis. Substrate contacts are provided by arginine 246 and tryptophan 248. A glycan (N-linked (GlcNAc...) asparagine) is linked at asparagine 285.

Belongs to the pectinesterase family.

The protein localises to the secreted. It carries out the reaction [(1-&gt;4)-alpha-D-galacturonosyl methyl ester](n) + n H2O = [(1-&gt;4)-alpha-D-galacturonosyl](n) + n methanol + n H(+). The protein operates within glycan metabolism; pectin degradation; 2-dehydro-3-deoxy-D-gluconate from pectin: step 1/5. In terms of biological role, involved in maceration and soft-rotting of plant tissue. The sequence is that of Probable pectinesterase A (pmeA) from Aspergillus oryzae (strain ATCC 42149 / RIB 40) (Yellow koji mold).